Here is a 102-residue protein sequence, read N- to C-terminus: Small ribosomal subunit protein uS10 (102 aa).

This sequence belongs to the universal ribosomal protein uS10 family. As to quaternary structure, part of the 30S ribosomal subunit.

Involved in the binding of tRNA to the ribosomes. In Gluconobacter oxydans (strain 621H) (Gluconobacter suboxydans), this protein is Small ribosomal subunit protein uS10.